The chain runs to 622 residues: Protein lev-9 (622 aa).

The N-terminal stretch at 1-16 is a signal peptide; that stretch reads MRFLLLLAISITYASA. A WAP; atypical domain is found at 17–61; the sequence is LSCPEVTLSQRPKHCKKECIADEDCKRNKRCMCDGECGLSCVNPI. Cystine bridges form between Cys-19–Cys-49, Cys-35–Cys-47, Cys-41–Cys-57, Cys-64–Cys-105, Cys-91–Cys-118, Cys-124–Cys-171, Cys-154–Cys-188, Cys-193–Cys-233, Cys-219–Cys-246, Cys-251–Cys-291, Cys-277–Cys-304, Cys-309–Cys-349, Cys-335–Cys-362, Cys-366–Cys-409, Cys-395–Cys-420, Cys-425–Cys-467, Cys-452–Cys-481, Cys-486–Cys-543, and Cys-529–Cys-556. Sushi domains lie at 62-120, 122-190, 191-248, 249-306, 307-364, 365-422, 423-483, and 484-558; these read AMCH…VCRL, LKCG…RCKA, RACP…NCKA, TECS…RCEE, IRCS…RCLA, SCRV…VCSP, LSCH…KCLP, and SWCE…KCVS. An N-linked (GlcNAc...) asparagine glycan is attached at Asn-411. A propeptide spanning residues 576–622 is cleaved from the precursor; that stretch reads SLPGRAVREYVDDELSTHRQHSGKCGIVSGKLERMIMQHSDNGVSVC.

Post-translationally, proteolytic processing of the C-terminus is required for clustering activity but not for secretion nor traffic.

Its subcellular location is the synapse. The protein localises to the secreted. Scaffolding protein that is necessary to cluster acetylcholine receptors at neuromuscular junctions. In Caenorhabditis elegans, this protein is Protein lev-9 (lev-9).